A 53-amino-acid chain; its full sequence is Rubredoxin 3 (53 aa).

A Rubredoxin-like domain is found at 1–53 (MQKWVCVPCGYEYDPADGDPENGIEPGTAFEDLPEDWVCPVCGVDKSFFEPVS). Residues cysteine 6, cysteine 9, cysteine 39, and cysteine 42 each contribute to the Fe cation site.

This sequence belongs to the rubredoxin family. In terms of assembly, monomer. Fe(3+) is required as a cofactor.

Its function is as follows. Functions as an electron acceptor for pyruvate ferredoxin oxidoreductase (PFOR). This is Rubredoxin 3 (rub3) from Chlorobaculum tepidum (strain ATCC 49652 / DSM 12025 / NBRC 103806 / TLS) (Chlorobium tepidum).